A 414-amino-acid polypeptide reads, in one-letter code: MKQYKILLIIADGLGDRPVSKLNGLTPLEAANKPAISDLLKSSMIGLMDPISPGVIPGSDTSHLSIFGLDPHVYYRGRGAFEALGAGATLKHGDVAFRGNFATVNNDLVVVDRRAGRKLEEGEELVKELNEKIKEINDVKIRFYKGTEHRVAVVLSGKGISDKVSDTDPHYEGLKVLESKPLEDSTEALRTAEIINILTRKVFDVLNSSEVNKRRIEQGEKPANIVLLRGAAHYVKLPSFSSYTKLKAAAVSATALIKGICRELGMNVVTPVGATGGIDTNYNAKAKAAIELLKENDFVFLHIKATDAASHDGLVEEKVKAIERIDKVIGTIVDNVGRDNLILMFTGDHATPVEVKEHSGDPVPILLYVPYPIINDNVKDFNEKEARKGSLRIRGLDVTNILLNYSNRAEKYGA.

Belongs to the BPG-independent phosphoglycerate mutase family. A-PGAM subfamily.

It catalyses the reaction (2R)-2-phosphoglycerate = (2R)-3-phosphoglycerate. It functions in the pathway carbohydrate degradation; glycolysis; pyruvate from D-glyceraldehyde 3-phosphate: step 3/5. Its function is as follows. Catalyzes the interconversion of 2-phosphoglycerate and 3-phosphoglycerate. This chain is 2,3-bisphosphoglycerate-independent phosphoglycerate mutase, found in Saccharolobus islandicus (strain M.14.25 / Kamchatka #1) (Sulfolobus islandicus).